The following is a 408-amino-acid chain: UDP-glucose 4-epimerase 2 (408 aa).

Residue 13–44 (TVLVTGGAGYIGSHAVLQLLLAGFRAVVVDNL) coordinates NAD(+). Ser-138 is a binding site for substrate. Tyr-162 serves as the catalytic Proton acceptor. The tract at residues 369 to 408 (GSPKQNGHCTNGFSESTRHNGHNGYGLVDSAKHNGNGHFH) is disordered. Over residues 370–383 (SPKQNGHCTNGFSE) the composition is skewed to polar residues.

Belongs to the NAD(P)-dependent epimerase/dehydratase family. Requires NAD(+) as cofactor.

The catalysed reaction is UDP-alpha-D-glucose = UDP-alpha-D-galactose. It participates in carbohydrate metabolism; galactose metabolism. Its function is as follows. Catalyzes the interconversion between UDP-glucose and UDP-galactose. In Oryza sativa subsp. japonica (Rice), this protein is UDP-glucose 4-epimerase 2 (UGE-2).